We begin with the raw amino-acid sequence, 649 residues long: Glycerol-3-phosphate dehydrogenase, mitochondrial (649 aa).

69–97 (DVLIIGGGATGTGVAVDASTRGLNVCLLE) lines the FAD pocket.

It belongs to the FAD-dependent glycerol-3-phosphate dehydrogenase family. FAD serves as cofactor.

It localises to the mitochondrion. The catalysed reaction is a quinone + sn-glycerol 3-phosphate = dihydroxyacetone phosphate + a quinol. Its pathway is polyol metabolism; glycerol degradation via glycerol kinase pathway; glycerone phosphate from sn-glycerol 3-phosphate (anaerobic route): step 1/1. The sequence is that of Glycerol-3-phosphate dehydrogenase, mitochondrial (gut2) from Schizosaccharomyces pombe (strain 972 / ATCC 24843) (Fission yeast).